We begin with the raw amino-acid sequence, 1188 residues long: MFTYVSKFFTNPDRNREDILESLDRENSFLDQKLMEEKMDQQLKANPNEINGVLSNKIAELTHGLSEMDVSKESSCTARKGVITSLDGDRGVIDKDVLFETKVAEDIILDLHVGCVVEYLTFTTGEAMRVVKVKSILEHSWEDTSQKEIEKAVDNLKNEKPTFFNTETRSVLGLISQRLASSIDVETEYGQLTVELDNIEMNFIPTNGDRVRLECNIQLDDGFVDKQGEILEVTKLFPTRIQEGEKCIVERVYVHMVVLGPETYILKTDLPTGTDLHLGDIVLADLIECQYSKFTRRAIKITPLEKNFGATKLTQQSSMGSSGSGKAVTVTGVNRFITAELWQKESVSLKLTNNLNRTLRLESITVCNDSESQLSVVSPLESKEISSGSEITVTFEIHTQFLGEAIEKYVLNFDLLKVRRVFTVIVCKTKEEVAEAEKRMIAAEALMAPGRNSQERSRFYANQVWCNKVDVIPGQQIVTKRRFVALRLGCFEVPKELRQICLTSERRQEMIKAIEQHYSFLTEPLSIKTYMHRFRLLLHLEEIECFVNFRNYDRDRAHFLRDGEFLTLQIENLAERRPSLVIGDTLRVINPWSDPDSQTTKSYEGIIHKVLFDRILLKFHSSFQEKYNGEDYRLEFYFSRYSFRKQHHAISKIVGVMGEDFLFPSKVTKRENPQLDVYMKDDDMYLYDSKLEWYNQSLNSIQKRAVFNILRGEAENIPYVLFGPPGSGKTMTLIETLLQLVRNLPGARILVGTPSNSSADLVTKRLIDSKALLQGDFIRLVSYNQVEKDLIPPEIMSYCATSDVGAVGSCEDKMMVTESGLKLRCQAKFIGTHRITISTCTTLGNFLQLGFPAGHFTHVLFDEAGQCTEPETMVPIVMLTKKRSQVVLSGDPRQLQSIVTSRIASKMGFSISFLERLLERSPYRKDLQRFPESSGYNPLVLTKLLYNYRALPSIMSIYSRLFYDDELIPVLSEKDSRESRLLSKLRCVFESEKDIPQAHGTFFYGIIGENRQNNDSPSWFNPQEVREVFLMTIALYRANVTADQIGIITPYQKQVKMLRSMFIGTDVVMPKIGSVEEFQGQERDIILISTVRSSEEILRMDARFSLGFVRCSKRLNVAVSRARAMMIIFGNPHLLAVDECWRQLILFCVKNNAYFGCDLPQMVINQKDEVPVCLETFVPSLNTTDDLN.

ATP is bound at residue 723 to 730 (GPPGSGKT). Positions 862 to 865 (DEAG) match the DEAG box motif.

Belongs to the DNA2/NAM7 helicase family. SDE3 subfamily. In terms of assembly, forms a complex with piwi and fs(1)Yb; this interaction is required for proper piRNA loading and nuclear localization of piwi. The interaction of piwi and fs(1)Yb is likely to occur via armi. Abundant in oocytes and syncytial blastoderm. Expressed at low level throughout development, including somatic tissues. First apparent early in oogenesis, in the cytoplasm of stem cells and mitotically dividing cystoblasts. In regions 2a and 2b of the germarium, it is most concentrated in the center of the germline cysts, where the pro-oocyte is located. In stage 1 and early stage 2 egg chambers, it accumulates at the anterior of the oocyte, near the ring canals. It also extends through the ring canals forming a branched structure that links the early oocyte with adjacent nurse cells. In stage 3 cysts, it accumulates at the posterior cortex and localizes to extensions that pass through the oocyte into the nurse cells. Through stages 4 to 7, it continues to be somewhat enriched at the posterior cortex of the oocyte, but at significantly lower level. In stage 9 to 10 egg chambers, it is found throughout the cytoplasm of the oocyte and nurse cells, with slight enrichment at the oocyte cortex.

The protein resides in the cytoplasm. It carries out the reaction ATP + H2O = ADP + phosphate + H(+). In terms of biological role, probable RNA helicase required for axial polarization of the oocyte during early and mid oogenesis. Plays a central role in RNA interference (RNAi) process, a process that mediates mRNA destruction of translational repression. Required for the assembly of the RISC complex, a complex required for target RNA destruction or repression. May be required in the RISC assembly to unwind miRNAs, in the production of single-stranded miRNA from the double-stranded miRNA, a key step in RISC formation. Required both for the translational control of oskar (osk) mRNA and cytoskeletal polarization in the oocyte. Required for somatic primary piRNA biogenesis. Involved in repression of long interspersed nuclear elements (LINEs) including HeT-A, I-element and TART LINEs. The polypeptide is Probable RNA helicase armi (Drosophila melanogaster (Fruit fly)).